A 198-amino-acid chain; its full sequence is Na(+)-translocating NADH-quinone reductase subunit E (198 aa).

6 consecutive transmembrane segments (helical) span residues 11–31 (AVFV…FLAV), 35–55 (VSTA…SVPV), 77–97 (FLNF…LEMI), 110–130 (GIFL…SFMV), 140–160 (VVYG…MAGI), and 176–196 (LGIT…FSGV).

It belongs to the NqrDE/RnfAE family. In terms of assembly, composed of six subunits; NqrA, NqrB, NqrC, NqrD, NqrE and NqrF.

Its subcellular location is the cell inner membrane. The enzyme catalyses a ubiquinone + n Na(+)(in) + NADH + H(+) = a ubiquinol + n Na(+)(out) + NAD(+). In terms of biological role, NQR complex catalyzes the reduction of ubiquinone-1 to ubiquinol by two successive reactions, coupled with the transport of Na(+) ions from the cytoplasm to the periplasm. NqrA to NqrE are probably involved in the second step, the conversion of ubisemiquinone to ubiquinol. The protein is Na(+)-translocating NADH-quinone reductase subunit E of Serratia proteamaculans (strain 568).